The primary structure comprises 130 residues: Iron-sulfur cluster assembly 1 homolog, mitochondrial (130 aa).

The N-terminal 24 residues, Met1–Ala24, are a transit peptide targeting the mitochondrion. The Fe cation site is built by Cys58, Cys122, and Cys124.

It belongs to the HesB/IscA family. Interacts with cry. As to expression, detected in head.

Its subcellular location is the mitochondrion. Involved in the assembly of mitochondrial iron-sulfur proteins. Probably involved in the binding of an intermediate of Fe/S cluster assembly. Required for maintenance of circadian rhythms under constant darkness. This is Iron-sulfur cluster assembly 1 homolog, mitochondrial from Drosophila melanogaster (Fruit fly).